The sequence spans 118 residues: Ribosome-binding factor A (118 aa).

It belongs to the RbfA family. As to quaternary structure, monomer. Binds 30S ribosomal subunits, but not 50S ribosomal subunits or 70S ribosomes.

It is found in the cytoplasm. One of several proteins that assist in the late maturation steps of the functional core of the 30S ribosomal subunit. Associates with free 30S ribosomal subunits (but not with 30S subunits that are part of 70S ribosomes or polysomes). Required for efficient processing of 16S rRNA. May interact with the 5'-terminal helix region of 16S rRNA. This is Ribosome-binding factor A from Bacillus thuringiensis (strain Al Hakam).